A 267-amino-acid chain; its full sequence is Tryptophan synthase alpha chain (267 aa).

Active-site proton acceptor residues include Glu-49 and Asp-60.

The protein belongs to the TrpA family. In terms of assembly, tetramer of two alpha and two beta chains.

It carries out the reaction (1S,2R)-1-C-(indol-3-yl)glycerol 3-phosphate + L-serine = D-glyceraldehyde 3-phosphate + L-tryptophan + H2O. The protein operates within amino-acid biosynthesis; L-tryptophan biosynthesis; L-tryptophan from chorismate: step 5/5. In terms of biological role, the alpha subunit is responsible for the aldol cleavage of indoleglycerol phosphate to indole and glyceraldehyde 3-phosphate. This chain is Tryptophan synthase alpha chain, found in Pelobacter propionicus (strain DSM 2379 / NBRC 103807 / OttBd1).